A 120-amino-acid polypeptide reads, in one-letter code: Large ribosomal subunit protein bL20 (120 aa).

It belongs to the bacterial ribosomal protein bL20 family.

Functionally, binds directly to 23S ribosomal RNA and is necessary for the in vitro assembly process of the 50S ribosomal subunit. It is not involved in the protein synthesizing functions of that subunit. This chain is Large ribosomal subunit protein bL20, found in Ligilactobacillus salivarius (strain UCC118) (Lactobacillus salivarius).